The following is a 1032-amino-acid chain: MAFTNYSSLNRAQLTFEYLHTNSTTHEFLFGALAELVDNARDADATRIDIYAERREDLRGGFMLCFLDDGAGMDPSDAASVIQFGKSAKRTPESTQIGQYGNGLKSGSMRIGKDFILFTKKEDTMTCLFLSRTFHEEEGIDEVIVPLPTWNARTREPVTDNVEKFAIETELIYKYSPFRTEEEVMTQFMKIPGDSGTLVIIFNLKLMDNGEPELDIISNPRDIQMAETSPEGTKPERRSFRAYAAVLYIDPRMRIFIHGHKVQTKRLSCCLYKPRMYKYTSSRFKTRAEQEVKKAEHVARIAEEKAREAESKARTLEVRLGGDLTRDSRVMLRQVQNRAITLRREADVKKRIKEAKQRALKEPKELNFVFGVNIEHRDLDGMFIYNCSRLIKMYEKVGPQLEGGMACGGVVGVVDVPYLVLEPTHNKQDFADAKEYRHLLRAMGEHLAQYWKDIAIAQRGIIKFWDEFGYLSANWNQPPSSELRYKRRRAMEIPTTIQCDLCLKWRTLPFQLSSVEKDYPDTWVCSMNPDPEQDRCEASEQKQKVPLGTFRKDMKTQEEKQKQLTEKIRQQQEKLEALQKTTPIRSQADLKKLPLEVTTRPSTEEPVRRPQRPRSPPLPAVIRNAPSRPPSLPTPRPASQPRKAPVISSTPKLPALAAREEASTSRLLQPPEAPRKPANTLVKTASRPAPLVQQLSPSLLPNSKSPREVPSPKVIKTPVVKKTESPIKLSPATPSRKRSVAVSDEEEVEEEAERRKERCKRGRFVVKEEKKDSNELSDSAGEEDSADLKRAQKDKGLHVEVRVNREWYTGRVTAVEVGKHVVRWKVKFDYVPTDTTPRDRWVEKGSEDVRLMKPPSPEHQSLDTQQEGGEEEVGPVAQQAIAVAEPSTSECLRIEPDTTALSTNHETIDLLVQILRNCLRYFLPPSFPISKKQLSAMNSDELISFPLKEYFKQYEVGLQNLCNSYQSRADSRAKASEESLRTSERKLRETEEKLQKLRTNIVALLQKVQEDIDINTDDELDAYIEDLITKGD.

Residue Ala2 is modified to N-acetylalanine. ATP contacts are provided by residues Asn39, Ser87–Lys89, and Gln99–Lys105. Position 39 (Asn39) interacts with Mg(2+). Positions Ser282 to Glu362 form a coiled coil. Lys427 contributes to the ATP binding site. The segment at Ala490–Lys544 adopts a CW-type zinc-finger fold. Positions 499, 502, 525, and 536 each coordinate Zn(2+). Disordered regions lie at residues Asp530–Gln563 and Ala577–Lys793. Composition is skewed to basic and acidic residues over residues Glu532–Gln543 and Phe550–Gln563. Positions Leu547–Ile584 form a coiled coil. The residue at position 582 (Thr582) is a Phosphothreonine. Ser602 and Ser615 each carry phosphoserine. The span at Ser627–Ala638 shows a compositional bias: pro residues. A Glycyl lysine isopeptide (Lys-Gly) (interchain with G-Cter in SUMO2) cross-link involves residue Lys652. Low complexity predominate over residues Pro690 to Lys704. At Ser696 the chain carries Phosphoserine. Residue Lys704 forms a Glycyl lysine isopeptide (Lys-Gly) (interchain with G-Cter in SUMO2) linkage. At Ser705 the chain carries Phosphoserine. Residues Ser711–Val720 show a composition bias toward low complexity. Lys716 participates in a covalent cross-link: Glycyl lysine isopeptide (Lys-Gly) (interchain with G-Cter in SUMO2). Ser725 and Ser730 each carry phosphoserine. Thr733 bears the Phosphothreonine mark. Ser739 is subject to Phosphoserine; by PAK1. Residues Ala741 to Arg761 are a coiled coil. Ser743 carries the phosphoserine modification. Residues Val765 to Asn774 show a composition bias toward basic and acidic residues. Lys767 participates in a covalent cross-link: Glycyl lysine isopeptide (Lys-Gly) (interchain with G-Cter in SUMO2). Phosphoserine is present on residues Ser777 and Ser779. A Glycyl lysine isopeptide (Lys-Gly) (interchain with G-Cter in SUMO2) cross-link involves residue Lys819. Residues Arg850–Glu870 are disordered. Lys932 participates in a covalent cross-link: Glycyl lysine isopeptide (Lys-Gly) (interchain with G-Cter in SUMO2). Residues Gln966 to Thr1016 are a coiled coil.

In terms of assembly, homodimerizes upon ATP-binding and dissociate upon ATP hydrolysis; homodimerization is required for gene silencing. Interacts with HDAC4. Interacts with ACLY. Interacts with TASOR and MPHOSPH8; the interactions associate MORC2 with the HUSH complex which recruits MORC2 to heterochromatic loci. In terms of processing, phosphorylated by PAK1 at Ser-739 upon DNA damage. Phosphorylation is required for ATPase activity and recruitment to damaged chromatin. Highly expressed in smooth muscle, pancreas and testis.

The protein resides in the nucleus. It localises to the cytoplasm. The protein localises to the cytosol. It is found in the chromosome. Its subcellular location is the nucleus matrix. The catalysed reaction is ATP + H2O = ADP + phosphate + H(+). Its activity is regulated as follows. ATPase activity is dependent of phosphorylation by PAK1 and presence of DNA. Its function is as follows. Essential for epigenetic silencing by the HUSH (human silencing hub) complex. Recruited by HUSH to target site in heterochromatin, the ATPase activity and homodimerization are critical for HUSH-mediated silencing. Represses germ cell-related genes and L1 retrotransposons in collaboration with SETDB1 and the HUSH complex, the silencing is dependent of repressive epigenetic modifications, such as H3K9me3 mark. Silencing events often occur within introns of transcriptionally active genes, and lead to the down-regulation of host gene expression. During DNA damage response, regulates chromatin remodeling through ATP hydrolysis. Upon DNA damage, is phosphorylated by PAK1, both colocalize to chromatin and induce H2AX expression. ATPase activity is required and dependent of phosphorylation by PAK1 and presence of DNA. Recruits histone deacetylases, such as HDAC4, to promoter regions, causing local histone H3 deacetylation and transcriptional repression of genes such as CA9. Exhibits a cytosolic function in lipogenesis, adipogenic differentiation, and lipid homeostasis by increasing the activity of ACLY, possibly preventing its dephosphorylation. This is ATPase MORC2 from Homo sapiens (Human).